The sequence spans 327 residues: Neurogenic differentiation factor 6-A (327 aa).

Residues 17–85 (GANFPRDCVG…KKMTKARVDR (69 aa)) form a disordered region. The segment covering 24–46 (CVGDLKGNKQEPFEKEETLSHVM) has biased composition (basic and acidic residues). Acidic residues predominate over residues 47 to 63 (DDDDSEKDEDEREDGQD). Residues 68–80 (PRRRGPRKKKMTK) show a composition bias toward basic residues. Positions 74-80 (RKKKMTK) match the Nuclear localization signal motif. Positions 88 to 140 (VRRMEANARERNRMHGLNNALDSLRKVVPCYSKTQKLSKIETLRLAKNYIWAL) constitute a bHLH domain.

In terms of assembly, efficient DNA binding requires dimerization with another bHLH protein. As to expression, embryonic olfactory bulbs. In adult, expressed in brain, eye, intestine, muscle, ovary and skin.

It localises to the nucleus. Functionally, differentiation factor required for neurogenesis. Acts as an upstream activator of isl1. This is Neurogenic differentiation factor 6-A from Danio rerio (Zebrafish).